A 213-amino-acid chain; its full sequence is Dimethylamine corrinoid protein 3 (213 aa).

In terms of domain architecture, B12-binding N-terminal spans 1-91 (MADIEGLLHE…DLPAGAEKKL (91 aa)). Residues 92-213 (GVIVNGTVEG…AVAKAKELLL (122 aa)) enclose the B12-binding domain. His104 provides a ligand contact to methylcob(III)alamin.

This sequence belongs to the methylamine corrinoid protein family.

It functions in the pathway one-carbon metabolism; methanogenesis from dimethylamine. Its function is as follows. Acts as a methyl group carrier between MtbB and MtbA. This Methanosarcina acetivorans (strain ATCC 35395 / DSM 2834 / JCM 12185 / C2A) protein is Dimethylamine corrinoid protein 3 (mtbC3).